Consider the following 504-residue polypeptide: ATP synthase subunit alpha (504 aa).

170–177 (GDRQTGKT) is a binding site for ATP.

The protein belongs to the ATPase alpha/beta chains family. As to quaternary structure, F-type ATPases have 2 components, CF(1) - the catalytic core - and CF(0) - the membrane proton channel. CF(1) has five subunits: alpha(3), beta(3), gamma(1), delta(1), epsilon(1). CF(0) has four main subunits: a(1), b(1), b'(1) and c(9-12).

The protein resides in the cellular thylakoid membrane. The catalysed reaction is ATP + H2O + 4 H(+)(in) = ADP + phosphate + 5 H(+)(out). Its function is as follows. Produces ATP from ADP in the presence of a proton gradient across the membrane. The alpha chain is a regulatory subunit. The protein is ATP synthase subunit alpha of Prochlorococcus marinus (strain NATL2A).